The sequence spans 394 residues: Elongation factor Tu (394 aa).

The tr-type G domain maps to K10–T204. The segment at G19–T26 is G1. Position 19-26 (G19–T26) interacts with GTP. T26 is a Mg(2+) binding site. A G2 region spans residues G60–N64. The segment at D81–G84 is G3. GTP contacts are provided by residues D81–H85 and N136–D139. Residues N136–D139 form a G4 region. Positions S174–L176 are G5.

This sequence belongs to the TRAFAC class translation factor GTPase superfamily. Classic translation factor GTPase family. EF-Tu/EF-1A subfamily. In terms of assembly, monomer.

It is found in the cytoplasm. It catalyses the reaction GTP + H2O = GDP + phosphate + H(+). Functionally, GTP hydrolase that promotes the GTP-dependent binding of aminoacyl-tRNA to the A-site of ribosomes during protein biosynthesis. This chain is Elongation factor Tu, found in Malacoplasma penetrans (strain HF-2) (Mycoplasma penetrans).